We begin with the raw amino-acid sequence, 26 residues long: Superoxide dismutase [Cu-Zn] (26 aa).

Cys-7 is lipidated: S-palmitoyl cysteine.

This sequence belongs to the Cu-Zn superoxide dismutase family. As to quaternary structure, homotrimer. Requires Cu cation as cofactor. It depends on Zn(2+) as a cofactor.

It localises to the cytoplasm. Its subcellular location is the nucleus. It carries out the reaction 2 superoxide + 2 H(+) = H2O2 + O2. In terms of biological role, destroys radicals which are normally produced within the cells and which are toxic to biological systems. This Paralichthys olivaceus (Bastard halibut) protein is Superoxide dismutase [Cu-Zn] (sod1).